Reading from the N-terminus, the 123-residue chain is Holo-[acyl-carrier-protein] synthase (123 aa).

Mg(2+)-binding residues include D8 and E56.

It belongs to the P-Pant transferase superfamily. AcpS family. Mg(2+) serves as cofactor.

It is found in the cytoplasm. The catalysed reaction is apo-[ACP] + CoA = holo-[ACP] + adenosine 3',5'-bisphosphate + H(+). Transfers the 4'-phosphopantetheine moiety from coenzyme A to a Ser of acyl-carrier-protein. In Treponema denticola (strain ATCC 35405 / DSM 14222 / CIP 103919 / JCM 8153 / KCTC 15104), this protein is Holo-[acyl-carrier-protein] synthase.